We begin with the raw amino-acid sequence, 709 residues long: Kelch-like protein 11 (709 aa).

An N-terminal signal peptide occupies residues Met-1–Ala-15. Residues Cys-95–Thr-171 enclose the BTB domain. One can recognise a BACK domain in the interval Cys-206–Lys-308. Kelch repeat units follow at residues Val-361 to Ser-408, Tyr-409 to Gly-454, Leu-456 to Asp-502, Phe-504 to Ser-557, and Asp-611 to Ile-662. A Phosphoserine modification is found at Ser-466.

As to quaternary structure, homodimer. Interacts with CUL3. Component of a cullin-RING-based BCR (BTB-CUL3-RBX1) E3 ubiquitin-protein ligase complex.

In terms of biological role, component of a cullin-RING-based BCR (BTB-CUL3-RBX1) E3 ubiquitin-protein ligase complex that mediates the ubiquitination of target proteins, leading most often to their proteasomal degradation. The chain is Kelch-like protein 11 (Klhl11) from Mus musculus (Mouse).